We begin with the raw amino-acid sequence, 323 residues long: uncharacterized protein (323 aa).

Residues 1–21 are disordered; it reads MGSYYSTESTKSNESNETTNN. Glycine 2 carries N-myristoyl glycine; by host lipidation.

This is an uncharacterized protein from Acanthamoeba polyphaga (Amoeba).